The following is a 479-amino-acid chain: Calcium-dependent mitochondrial ATP-magnesium/phosphate carrier protein 3 (479 aa).

Residues 1-208 are Mitochondrial intermembrane-facing; it reads MESSKPKNRN…ISKHVKRSRL (208 aa). 4 consecutive EF-hand domains span residues 33–68, 69–104, 105–135, and 136–171; these read EREI…LQIP, PEYK…KELE, LYRI…AGIE, and IDDE…YPHE. 5 residues coordinate Ca(2+): D82, N84, D86, R88, and E93. 5 residues coordinate Ca(2+): D149, D151, N153, T155, and E160. 3 Solcar repeats span residues 203–286, 294–381, and 392–475; these read VKRS…LKPM, IGTS…LKDL, and PGPL…MKKN. Residues 209-226 traverse the membrane as a helical segment; the sequence is LLAGGLAGAVSRTATAPL. The Mitochondrial matrix portion of the chain corresponds to 227–260; the sequence is DRLKVVLQVQRAHAGVLPTIKKIWREDKLMGFFR. Residues 261–280 form a helical membrane-spanning segment; the sequence is GNGLNVMKVAPESAIKFCAY. The Mitochondrial intermembrane segment spans residues 281 to 303; that stretch reads EMLKPMIGGEDGDIGTSGRLMAG. Residues 304–317 traverse the membrane as a helical segment; it reads GMAGALAQTAIYPM. Residues 318-355 are Mitochondrial matrix-facing; sequence DLVKTRLQTCVSEGGKAPKLWKLTKDIWVREGPRAFYK. Residues 356-375 traverse the membrane as a helical segment; the sequence is GLFPSLLGIVPYAGIDLAAY. At 376 to 397 the chain is on the mitochondrial intermembrane side; it reads ETLKDLSRTYILQDTEPGPLIQ. A helical membrane pass occupies residues 398–415; that stretch reads LSCGMTSGALGASCVYPL. Topologically, residues 416–449 are mitochondrial matrix; the sequence is QVVRTRMQADSSKTTMKQEFMNTMKGEGLRGFYR. Residues 450–469 traverse the membrane as a helical segment; the sequence is GLLPNLLKVVPAASITYIVY. Over 470 to 479 the chain is Mitochondrial intermembrane; that stretch reads EAMKKNMALD.

The protein belongs to the mitochondrial carrier (TC 2.A.29) family. In terms of tissue distribution, expressed in flowers, leaves, stems, roots and seedlings, mostly in seedlings.

The protein resides in the mitochondrion inner membrane. With respect to regulation, counter-exchange transport activity is saturable and inhibited by pyridoxal-5'-phosphate, EDTA and EGTA. Activated by calcium Ca(2+) and manganese Mn(2+) ions, and slightly by iron Fe(2+) and zinc Zn(2+) ions. Repressed by copper ions Cu(2+) and slightly by magnesium Mg(2+) ions. Magnesium Mg(2+) ions promotes slightly ATP uptake, ATP-Mg(2+) being exchanged with ATP(4-). Calcium-dependent mitochondrial carrier protein that catalyzes the import of ATP co-transported with metal divalent cations across the mitochondrial inner membrane in exchange for phosphate (Pi). Can transport phosphate, AMP, ADP, ATP, adenosine 5'-phosphosulfate, sulfate and thiosulfate, and, to a lesser extent, other nucleotides. Binds calcium ions Ca(2+). Also mediates calcium uptake. In Arabidopsis thaliana (Mouse-ear cress), this protein is Calcium-dependent mitochondrial ATP-magnesium/phosphate carrier protein 3.